A 395-amino-acid chain; its full sequence is MAKQKFERTKPHVNVGTIGHVDHGKTTLTAAITSVLAGKGLATKRDYNQIDGAPEEKARGITINASHVEYETVNRHYAHVDCPGHADYVKNMITGAAQMDGAILVVSAADGPMPQTREHILLSRQVGVPKLVVFLNKADLVDDEELLDLVEMEVRELLSEYDFPGDDIPVIKGSALGALEGKPEWVAKVEELMDAVDAYIDTPLRATDKPFMMPVEDVFTITGRGTVATGRVDRGIVKVGDQVEIVGITDTKTTTVTGVEMFRKLLDQAEAGDNIGALLRGVDREGVERGQVLSKPGTVKPHAKFTAQIYVLSKEEGGRHTAFFSNYRPQFYFRTTDITGIITLGEGTEMVMPGDNAEVTVELIHPIALEEGTKFSIREGGRTVASGSVVKILAD.

The tr-type G domain maps to 10 to 204 (KPHVNVGTIG…AVDAYIDTPL (195 aa)). The interval 19-26 (GHVDHGKT) is G1. 19–26 (GHVDHGKT) contacts GTP. Threonine 26 provides a ligand contact to Mg(2+). Positions 60–64 (GITIN) are G2. The interval 81 to 84 (DCPG) is G3. GTP is bound by residues 81–85 (DCPGH) and 136–139 (NKAD). Residues 136–139 (NKAD) form a G4 region. The tract at residues 174–176 (SAL) is G5.

It belongs to the TRAFAC class translation factor GTPase superfamily. Classic translation factor GTPase family. EF-Tu/EF-1A subfamily. As to quaternary structure, monomer.

It is found in the cytoplasm. The enzyme catalyses GTP + H2O = GDP + phosphate + H(+). GTP hydrolase that promotes the GTP-dependent binding of aminoacyl-tRNA to the A-site of ribosomes during protein biosynthesis. The polypeptide is Elongation factor Tu (Acholeplasma laidlawii (strain PG-8A)).